Reading from the N-terminus, the 181-residue chain is Putative J domain-containing protein R266 (181 aa).

Positions 6 to 70 (NYYQILDVDN…LKRLNYDSYL (65 aa)) constitute a J domain.

In Acanthamoeba polyphaga (Amoeba), this protein is Putative J domain-containing protein R266.